Consider the following 258-residue polypeptide: MTEGIQNVSQPQIKIENLNLWYGEKQALKNVSMQIPKNSITALIGPSGCGKSTFIRCLNRMNDLINNCRIEGKVSIEGKDIYEPDVDAVELRKNVGMVFQKPNPFPMSIYDNVAYGPRIHGANKKDLDGVVEQALRSAAIWDEVSDRLKSPALSLSGGQQQRLCIARTLAVKPKTILFDEPTSALDPISTLRIEDLTMELKKDYTIVIVTHNMQQAARISDYTGFFLMGELIEFDQTRQIFQNPREKSTEDYITGRFG.

The region spanning 13-253 (IKIENLNLWY…PREKSTEDYI (241 aa)) is the ABC transporter domain. 45-52 (GPSGCGKS) is a binding site for ATP.

It belongs to the ABC transporter superfamily. Phosphate importer (TC 3.A.1.7) family. As to quaternary structure, the complex is composed of two ATP-binding proteins (PstB), two transmembrane proteins (PstC and PstA) and a solute-binding protein (PstS).

The protein localises to the cell membrane. The enzyme catalyses phosphate(out) + ATP + H2O = ADP + 2 phosphate(in) + H(+). Functionally, part of the ABC transporter complex PstSACB involved in phosphate import. Responsible for energy coupling to the transport system. This is Phosphate import ATP-binding protein PstB from Methanosarcina barkeri (strain Fusaro / DSM 804).